A 161-amino-acid chain; its full sequence is Nucleotide-binding protein Csal_2524 (161 aa).

The protein belongs to the YajQ family.

Nucleotide-binding protein. The chain is Nucleotide-binding protein Csal_2524 from Chromohalobacter salexigens (strain ATCC BAA-138 / DSM 3043 / CIP 106854 / NCIMB 13768 / 1H11).